The following is a 392-amino-acid chain: MTNMIRQFLRQEAAGGLILIFAAVVALFMANSPLQGFYQSFLDVPVSVKIASLDISKPLLLWINDGLMAIFFLVVGLEVKRELMEGSLAGRDKAIFPAIAALGGMLAPALIYLLFNGADEVTRQGWAIPAATDIAFALGVMALLGNRVPTSLKVFLLALAIIDDLGVIIIIALFYTHEVSLQALGMAAAAIALLGYMNWRGVGKTSAYLLVGLVLWVCILKSGVHATLAGVIVGFMIPLHTQDKRSPSESLEHGLHPWVAYLILPLFAFANAGVSLQGVSISGLTSLLPLGIASGLFIGKPLGIFLFSWLAVKLGVAKLPDAINFKQIFAVSVLCGIGFTMSIFIASLAFDGADIALTTYSKLGILLGSTTAAVVGYSLLRLALPAKRNITH.

Helical transmembrane passes span 14 to 34, 59 to 79, 95 to 115, 125 to 145, 154 to 174, 179 to 199, 213 to 233, 254 to 274, 287 to 307, 328 to 348, and 363 to 383; these read AGGL…NSPL, LLLW…GLEV, IFPA…YLLF, GWAI…ALLG, VFLL…IALF, VSLQ…YMNW, LVLW…GVIV, GLHP…NAGV, LLPL…IFLF, IFAV…IASL, and LGIL…LRLA.

Belongs to the NhaA Na(+)/H(+) (TC 2.A.33) antiporter family.

Its subcellular location is the cell inner membrane. The catalysed reaction is Na(+)(in) + 2 H(+)(out) = Na(+)(out) + 2 H(+)(in). Functionally, na(+)/H(+) antiporter that extrudes sodium in exchange for external protons. The chain is Na(+)/H(+) antiporter NhaA from Yersinia enterocolitica serotype O:8 / biotype 1B (strain NCTC 13174 / 8081).